A 323-amino-acid polypeptide reads, in one-letter code: Elongation factor P--(R)-beta-lysine ligase (323 aa).

Substrate is bound at residue 74 to 76 (SPE). Residues 98 to 100 (RNE) and asparagine 107 contribute to the ATP site. Substrate is bound at residue tyrosine 116. 242–243 (EL) contacts ATP. Residue glutamate 249 participates in substrate binding. Glycine 298 serves as a coordination point for ATP.

It belongs to the class-II aminoacyl-tRNA synthetase family. EpmA subfamily. As to quaternary structure, homodimer.

The catalysed reaction is D-beta-lysine + L-lysyl-[protein] + ATP = N(6)-((3R)-3,6-diaminohexanoyl)-L-lysyl-[protein] + AMP + diphosphate + H(+). Its function is as follows. With EpmB is involved in the beta-lysylation step of the post-translational modification of translation elongation factor P (EF-P). Catalyzes the ATP-dependent activation of (R)-beta-lysine produced by EpmB, forming a lysyl-adenylate, from which the beta-lysyl moiety is then transferred to the epsilon-amino group of a conserved specific lysine residue in EF-P. This Vibrio vulnificus (strain YJ016) protein is Elongation factor P--(R)-beta-lysine ligase.